The chain runs to 403 residues: S-adenosylmethionine synthase (403 aa).

Histidine 17 is a binding site for ATP. Residue aspartate 19 coordinates Mg(2+). Glutamate 45 contacts K(+). 2 residues coordinate L-methionine: glutamate 58 and glutamine 104. The flexible loop stretch occupies residues 104 to 114; that stretch reads QSPDIAQGVDT. ATP-binding positions include 179-181, 250-251, aspartate 259, 265-266, alanine 282, and lysine 286; these read DGK, KF, and RK. An L-methionine-binding site is contributed by aspartate 259. Lysine 290 lines the L-methionine pocket.

Belongs to the AdoMet synthase family. Homotetramer; dimer of dimers. Mg(2+) is required as a cofactor. K(+) serves as cofactor.

Its subcellular location is the cytoplasm. It catalyses the reaction L-methionine + ATP + H2O = S-adenosyl-L-methionine + phosphate + diphosphate. It functions in the pathway amino-acid biosynthesis; S-adenosyl-L-methionine biosynthesis; S-adenosyl-L-methionine from L-methionine: step 1/1. In terms of biological role, catalyzes the formation of S-adenosylmethionine (AdoMet) from methionine and ATP. The overall synthetic reaction is composed of two sequential steps, AdoMet formation and the subsequent tripolyphosphate hydrolysis which occurs prior to release of AdoMet from the enzyme. The protein is S-adenosylmethionine synthase of Mycobacterium avium (strain 104).